Here is a 286-residue protein sequence, read N- to C-terminus: Isopentenyl-diphosphate Delta-isomerase II (286 aa).

One can recognise a Nudix hydrolase domain in the interval 104-256 (MLHRAFSVFL…GLKLSPWFRL (153 aa)). Catalysis depends on residues Cys-141 and Glu-203.

Belongs to the IPP isomerase type 1 family.

The enzyme catalyses isopentenyl diphosphate = dimethylallyl diphosphate. It participates in isoprenoid biosynthesis; dimethylallyl diphosphate biosynthesis; dimethylallyl diphosphate from isopentenyl diphosphate: step 1/1. Its pathway is porphyrin-containing compound metabolism; chlorophyll biosynthesis. Catalyzes the 1,3-allylic rearrangement of the homoallylic substrate isopentenyl (IPP) to its highly electrophilic allylic isomer, dimethylallyl diphosphate (DMAPP). The polypeptide is Isopentenyl-diphosphate Delta-isomerase II (IPI2) (Clarkia breweri (Fairy fans)).